Reading from the N-terminus, the 115-residue chain is uncharacterized protein (115 aa).

In terms of domain architecture, CHCH spans glycine 63–glycine 108. 2 short sequence motifs (cx9C motif) span residues cysteine 66–cysteine 76 and cysteine 90–cysteine 100. 2 cysteine pairs are disulfide-bonded: cysteine 66-cysteine 100 and cysteine 76-cysteine 90.

This is an uncharacterized protein from Caenorhabditis elegans.